The chain runs to 130 residues: S-protein homolog 32 (130 aa).

Positions 1–21 (MKYFTIFVFVFSLCMLGHVSG) are cleaved as a signal peptide.

The protein belongs to the plant self-incompatibility (S1) protein family.

It is found in the secreted. The polypeptide is S-protein homolog 32 (Arabidopsis thaliana (Mouse-ear cress)).